The sequence spans 25 residues: Non-specific lipid-transfer protein 3 (25 aa).

Seeds (at protein level).

Plant non-specific lipid-transfer proteins transfer phospholipids as well as galactolipids across membranes. May play a role in wax or cutin deposition in the cell walls of expanding epidermal cells and certain secretory tissues. Has antibacterial and antifungal activity. Displays antibacterial activity towards both Gram-negative bacteria, P.carotovorum (IC(50)=11.5 uM) and P.syringae (IC(50)=12.0 uM), and Gram-positive bacterium C.michiganensis subsp michiganense (IC(50)=11.2 uM). Also displays antifungal activity towards A.niger VKM F-33 (IC(50)=1.05 uM) and B.cinerea TSKHA (IC(50)=1.88 uM) and relatively moderate activity towards B.sorokiniana VKM F-1448 (IC(50)=1.55 uM). Displays some inhibitory activity towards P.infestans OSV12. The chain is Non-specific lipid-transfer protein 3 from Nigella sativa (Black cumin).